The chain runs to 98 residues: NADH-ubiquinone oxidoreductase chain 4L (98 aa).

The next 3 membrane-spanning stretches (helical) occupy residues 1-21 (MTPT…GMLI), 26-46 (LMAS…MTAV), and 61-81 (IIML…LVSI).

This sequence belongs to the complex I subunit 4L family. In terms of assembly, core subunit of respiratory chain NADH dehydrogenase (Complex I) which is composed of 45 different subunits.

Its subcellular location is the mitochondrion inner membrane. It carries out the reaction a ubiquinone + NADH + 5 H(+)(in) = a ubiquinol + NAD(+) + 4 H(+)(out). In terms of biological role, core subunit of the mitochondrial membrane respiratory chain NADH dehydrogenase (Complex I) which catalyzes electron transfer from NADH through the respiratory chain, using ubiquinone as an electron acceptor. Part of the enzyme membrane arm which is embedded in the lipid bilayer and involved in proton translocation. This is NADH-ubiquinone oxidoreductase chain 4L (MT-ND4L) from Papio hamadryas (Hamadryas baboon).